Reading from the N-terminus, the 415-residue chain is Cysteate synthase (415 aa).

Lysine 104 carries the N6-(pyridoxal phosphate)lysine modification. Residues asparagine 131 and threonine 376 each coordinate pyridoxal 5'-phosphate.

The protein belongs to the threonine synthase family. Cysteate synthase subfamily. In terms of assembly, homotrimer. Pyridoxal 5'-phosphate is required as a cofactor.

The catalysed reaction is O-phospho-L-serine + sulfite + H(+) = L-cysteate + phosphate. Its pathway is cofactor biosynthesis; coenzyme M biosynthesis. In terms of biological role, specifically catalyzes the beta-elimination of phosphate from L-phosphoserine and the beta-addition of sulfite to the dehydroalanine intermediate to produce L-cysteate. The protein is Cysteate synthase of Methanothrix thermoacetophila (strain DSM 6194 / JCM 14653 / NBRC 101360 / PT) (Methanosaeta thermophila).